Here is a 195-residue protein sequence, read N- to C-terminus: Recombination protein RecR (195 aa).

A C4-type zinc finger spans residues 53–68; it reads CPVCFNIDVKSPCSIC. The Toprim domain occupies 76-171; it reads QLLCIVEELG…KVTRLACGIP (96 aa).

This sequence belongs to the RecR family.

In terms of biological role, may play a role in DNA repair. It seems to be involved in an RecBC-independent recombinational process of DNA repair. It may act with RecF and RecO. This is Recombination protein RecR from Ehrlichia chaffeensis (strain ATCC CRL-10679 / Arkansas).